We begin with the raw amino-acid sequence, 347 residues long: GMP reductase (347 aa).

Residue 108-131 (DDFTKTRQILAMSTALRFICVDVA) coordinates NADP(+). 2 residues coordinate K(+): Gly-181 and Gly-183. Catalysis depends on Cys-186, which acts as the Thioimidate intermediate. Residue 216–239 (IVGDGGCTCPGDVAKAFGGGADFV) participates in NADP(+) binding.

Belongs to the IMPDH/GMPR family. GuaC type 1 subfamily. As to quaternary structure, homotetramer.

It catalyses the reaction IMP + NH4(+) + NADP(+) = GMP + NADPH + 2 H(+). Catalyzes the irreversible NADPH-dependent deamination of GMP to IMP. It functions in the conversion of nucleobase, nucleoside and nucleotide derivatives of G to A nucleotides, and in maintaining the intracellular balance of A and G nucleotides. The polypeptide is GMP reductase (Aeromonas salmonicida (strain A449)).